The sequence spans 494 residues: Aspartyl/glutamyl-tRNA(Asn/Gln) amidotransferase subunit B (494 aa).

The protein belongs to the GatB/GatE family. GatB subfamily. As to quaternary structure, heterotrimer of A, B and C subunits.

It catalyses the reaction L-glutamyl-tRNA(Gln) + L-glutamine + ATP + H2O = L-glutaminyl-tRNA(Gln) + L-glutamate + ADP + phosphate + H(+). The enzyme catalyses L-aspartyl-tRNA(Asn) + L-glutamine + ATP + H2O = L-asparaginyl-tRNA(Asn) + L-glutamate + ADP + phosphate + 2 H(+). Functionally, allows the formation of correctly charged Asn-tRNA(Asn) or Gln-tRNA(Gln) through the transamidation of misacylated Asp-tRNA(Asn) or Glu-tRNA(Gln) in organisms which lack either or both of asparaginyl-tRNA or glutaminyl-tRNA synthetases. The reaction takes place in the presence of glutamine and ATP through an activated phospho-Asp-tRNA(Asn) or phospho-Glu-tRNA(Gln). In Protochlamydia amoebophila (strain UWE25), this protein is Aspartyl/glutamyl-tRNA(Asn/Gln) amidotransferase subunit B.